An 86-amino-acid chain; its full sequence is Large ribosomal subunit protein bL27 (86 aa).

It belongs to the bacterial ribosomal protein bL27 family.

In Xanthomonas oryzae pv. oryzae (strain PXO99A), this protein is Large ribosomal subunit protein bL27.